The primary structure comprises 55 residues: ATP synthase F(0) complex subunit 8 (55 aa).

A helical membrane pass occupies residues 8 to 24 (PWFSIMVMTWLTLALLI). A disordered region spans residues 35 to 55 (NPPSKKPSLITKPTPWAWPWT).

The protein belongs to the ATPase protein 8 family. Component of the ATP synthase complex composed at least of ATP5F1A/subunit alpha, ATP5F1B/subunit beta, ATP5MC1/subunit c (homooctomer), MT-ATP6/subunit a, MT-ATP8/subunit 8, ATP5ME/subunit e, ATP5MF/subunit f, ATP5MG/subunit g, ATP5MK/subunit k, ATP5MJ/subunit j, ATP5F1C/subunit gamma, ATP5F1D/subunit delta, ATP5F1E/subunit epsilon, ATP5PF/subunit F6, ATP5PB/subunit b, ATP5PD/subunit d, ATP5PO/subunit OSCP. ATP synthase complex consists of a soluble F(1) head domain (subunits alpha(3) and beta(3)) - the catalytic core - and a membrane F(0) domain - the membrane proton channel (subunits c, a, 8, e, f, g, k and j). These two domains are linked by a central stalk (subunits gamma, delta, and epsilon) rotating inside the F1 region and a stationary peripheral stalk (subunits F6, b, d, and OSCP).

The protein resides in the mitochondrion membrane. Its function is as follows. Subunit 8, of the mitochondrial membrane ATP synthase complex (F(1)F(0) ATP synthase or Complex V) that produces ATP from ADP in the presence of a proton gradient across the membrane which is generated by electron transport complexes of the respiratory chain. ATP synthase complex consist of a soluble F(1) head domain - the catalytic core - and a membrane F(1) domain - the membrane proton channel. These two domains are linked by a central stalk rotating inside the F(1) region and a stationary peripheral stalk. During catalysis, ATP synthesis in the catalytic domain of F(1) is coupled via a rotary mechanism of the central stalk subunits to proton translocation. In vivo, can only synthesize ATP although its ATP hydrolase activity can be activated artificially in vitro. Part of the complex F(0) domain. This Anas platyrhynchos (Mallard) protein is ATP synthase F(0) complex subunit 8.